Consider the following 514-residue polypeptide: tRNA-2-methylthio-N(6)-dimethylallyladenosine synthase (514 aa).

The disordered stretch occupies residues 1–21 (MNEEQRKASSVDVLAERDKKA). In terms of domain architecture, MTTase N-terminal spans 68–186 (RTFLIKTYGC…LPEILEEAYL (119 aa)). [4Fe-4S] cluster contacts are provided by C77, C113, C147, C223, C227, and C230. The 232-residue stretch at 209-440 (REGNIKAWVN…KKVGHYSQIA (232 aa)) folds into the Radical SAM core domain. In terms of domain architecture, TRAM spans 442–505 (SKYEGQTVTV…QYSLNGSFIK (64 aa)).

The protein belongs to the methylthiotransferase family. MiaB subfamily. Monomer. It depends on [4Fe-4S] cluster as a cofactor.

It localises to the cytoplasm. It carries out the reaction N(6)-dimethylallyladenosine(37) in tRNA + (sulfur carrier)-SH + AH2 + 2 S-adenosyl-L-methionine = 2-methylsulfanyl-N(6)-dimethylallyladenosine(37) in tRNA + (sulfur carrier)-H + 5'-deoxyadenosine + L-methionine + A + S-adenosyl-L-homocysteine + 2 H(+). Functionally, catalyzes the methylthiolation of N6-(dimethylallyl)adenosine (i(6)A), leading to the formation of 2-methylthio-N6-(dimethylallyl)adenosine (ms(2)i(6)A) at position 37 in tRNAs that read codons beginning with uridine. This Staphylococcus aureus (strain USA300 / TCH1516) protein is tRNA-2-methylthio-N(6)-dimethylallyladenosine synthase.